The chain runs to 208 residues: Probable GTP-binding protein EngB (208 aa).

Residues 23 to 205 form the EngB-type G domain; the sequence is LTSEMVILGR…RQTLLKYLLT (183 aa). GTP contacts are provided by residues 31-38, 57-61, 84-87, 154-157, and 182-184; these read GRSNVGKS, GKTRL, DLPG, TKFD, and FNA. Mg(2+)-binding residues include serine 38 and threonine 59.

This sequence belongs to the TRAFAC class TrmE-Era-EngA-EngB-Septin-like GTPase superfamily. EngB GTPase family. Mg(2+) is required as a cofactor.

In terms of biological role, necessary for normal cell division and for the maintenance of normal septation. This is Probable GTP-binding protein EngB from Helicobacter pylori (strain Shi470).